Consider the following 391-residue polypeptide: Thioredoxin-interacting protein (391 aa).

Lys-212 participates in a covalent cross-link: Glycyl lysine isopeptide (Lys-Gly) (interchain with G-Cter in ubiquitin). Ser-361 is modified (phosphoserine).

It belongs to the arrestin family. As to quaternary structure, homodimer; disulfide-linked. Interacts with TXN/thioredoxin through its redox-active site. Interacts with transcriptional repressors ZBTB16, ZBTB32 and HDAC1. Interacts with DDIT4. Post-translationally, ubiquitinated; undergoes heterotypic 'Lys-48'-/'Lys-63'-branched polyubiquitination catalyzed by ITCH and UBR5 resulting in proteasomal degradation. Deubiquitinated by USP5, leading to TXNIP stabilization.

Its subcellular location is the cytoplasm. May act as an oxidative stress mediator by inhibiting thioredoxin activity or by limiting its bioavailability. Interacts with COPS5 and restores COPS5-induced suppression of CDKN1B stability, blocking the COPS5-mediated translocation of CDKN1B from the nucleus to the cytoplasm. Functions as a transcriptional repressor, possibly by acting as a bridge molecule between transcription factors and corepressor complexes, and over-expression will induce G0/G1 cell cycle arrest. Required for the maturation of natural killer cells. Acts as a suppressor of tumor cell growth. Inhibits the proteasomal degradation of DDIT4, and thereby contributes to the inhibition of the mammalian target of rapamycin complex 1 (mTORC1). The sequence is that of Thioredoxin-interacting protein (TXNIP) from Pongo abelii (Sumatran orangutan).